Reading from the N-terminus, the 601-residue chain is ATP-dependent lipid A-core flippase (601 aa).

Helical transmembrane passes span 33–53 (CVAV…AKLI), 72–92 (VSLM…LSEY), 158–178 (VIGL…VFLV), 255–275 (LGGG…LYVV), and 283–303 (TITP…LSPI). The 282-residue stretch at 34-315 (VAVVAMIAYA…LSQVVSVMQR (282 aa)) folds into the ABC transmembrane type-1 domain. Positions 347-583 (IEYRHVSLVY…RGGYADLYAM (237 aa)) constitute an ABC transporter domain. 381 to 388 (GQSGSGKT) is an ATP binding site.

This sequence belongs to the ABC transporter superfamily. Lipid exporter (TC 3.A.1.106) family. In terms of assembly, homodimer.

Its subcellular location is the cell inner membrane. It carries out the reaction ATP + H2O + lipid A-core oligosaccharideSide 1 = ADP + phosphate + lipid A-core oligosaccharideSide 2.. Its function is as follows. Involved in lipopolysaccharide (LPS) biosynthesis. Translocates lipid A-core from the inner to the outer leaflet of the inner membrane. Transmembrane domains (TMD) form a pore in the inner membrane and the ATP-binding domain (NBD) is responsible for energy generation. This Methylococcus capsulatus (strain ATCC 33009 / NCIMB 11132 / Bath) protein is ATP-dependent lipid A-core flippase.